The chain runs to 134 residues: Large ribosomal subunit protein eL32 (134 aa).

The protein belongs to the eukaryotic ribosomal protein eL32 family.

The polypeptide is Large ribosomal subunit protein eL32 (RpL32) (Drosophila melanogaster (Fruit fly)).